Here is a 136-residue protein sequence, read N- to C-terminus: Holo-[acyl-carrier-protein] synthase (136 aa).

Mg(2+) contacts are provided by D7 and E53.

Belongs to the P-Pant transferase superfamily. AcpS family. The cofactor is Mg(2+).

The protein localises to the cytoplasm. The enzyme catalyses apo-[ACP] + CoA = holo-[ACP] + adenosine 3',5'-bisphosphate + H(+). Its function is as follows. Transfers the 4'-phosphopantetheine moiety from coenzyme A to a Ser of acyl-carrier-protein. In Roseiflexus castenholzii (strain DSM 13941 / HLO8), this protein is Holo-[acyl-carrier-protein] synthase.